The primary structure comprises 172 residues: MVEIKVIHGDITKMTVDAIVNAANTSLLGGGGVDGAIHRAAGPALLAACRPLHGCATGEAKITPGFRLPAKYVIHTPGPVWQGGQHNELQLLANSYRNSLNLAAENHCQTVAFPSISTGVYHFPLSIAAPLALKTLQATAQTTAHTVQTITIVCFDDQTQNVFSTALAALTN.

The Macro domain maps to 1–171 (MVEIKVIHGD…VFSTALAALT (171 aa)).

Belongs to the MacroD-type family.

The chain is Macro domain-containing protein lp_3408 from Lactiplantibacillus plantarum (strain ATCC BAA-793 / NCIMB 8826 / WCFS1) (Lactobacillus plantarum).